Here is a 151-residue protein sequence, read N- to C-terminus: UPF0179 protein MJ1627 (151 aa).

The protein belongs to the UPF0179 family.

The chain is UPF0179 protein MJ1627 from Methanocaldococcus jannaschii (strain ATCC 43067 / DSM 2661 / JAL-1 / JCM 10045 / NBRC 100440) (Methanococcus jannaschii).